Reading from the N-terminus, the 175-residue chain is ATP-dependent protease subunit HslV (175 aa).

Residue Thr2 is part of the active site. Positions 156, 159, and 162 each coordinate Na(+).

Belongs to the peptidase T1B family. HslV subfamily. In terms of assembly, a double ring-shaped homohexamer of HslV is capped on each side by a ring-shaped HslU homohexamer. The assembly of the HslU/HslV complex is dependent on binding of ATP.

The protein localises to the cytoplasm. It carries out the reaction ATP-dependent cleavage of peptide bonds with broad specificity.. With respect to regulation, allosterically activated by HslU binding. Protease subunit of a proteasome-like degradation complex believed to be a general protein degrading machinery. This Rhizobium etli (strain ATCC 51251 / DSM 11541 / JCM 21823 / NBRC 15573 / CFN 42) protein is ATP-dependent protease subunit HslV.